Reading from the N-terminus, the 108-residue chain is UPF0145 protein Patl_2194 (108 aa).

The protein belongs to the UPF0145 family.

The sequence is that of UPF0145 protein Patl_2194 from Pseudoalteromonas atlantica (strain T6c / ATCC BAA-1087).